A 934-amino-acid polypeptide reads, in one-letter code: MDNNPNINECIPYNCLSNPEVEVLGGERIETGYTPIDISLSLTQFLLSEFVPGAGFVLGLVDIIWGIFGPSQWDAFLVQIEQLINQRIEEFARNQAISRLEGLSNLYQIYAESFREWEADPTNPALREEMRIQFNDMNSALTTAIPLFAVQNYQVPLLSVYVQAANLHLSVLRDVSVFGQRWGFDAATINSRYNDLTRLIGNYTDYAVRWYNTGLERVWGPDSRDWVRYNQFRRELTLTVLDIVALFSNYDSRRYPIRTVSQLTREIYTNPVLENFDGSFRGMAQRIEQNIRQPHLMDILNRITIYTDVHRGFNYWSGHQITASPVGFSGPEFAFPLFGNAGNAAPPVLVSLTGLGIFRTLSSPLYRRIILGSGPNNQELFVLDGTEFSFASLTTNLPSTIYRQRGTVDSLDVIPPQDNSVPPRAGFSHRLSHVTMLSQAAGAVYTLRAPTFSWQHRSAEFNNIIPSSQITQIPLTKSTNLGSGTSVVKGPGFTGGDILRRTSPGQISTLRVNITAPLSQRYRVRIRYASTTNLQFHTSIDGRPINQGNFSATMSSGSNLQSGSFRTVGFTTPFNFSNGSSVFTLSAHVFNSGNEVYIDRIEFVPAEVTFEAEYDLERAQKAVNELFTSSNQIGLKTDVTDYHIDQVSNLVECLSDEFCLDEKQELSEKVKHAKRLSDERNLLQDPNFRGINRQLDRGWRGSTDITIQGGDDVFKENYVTLLGTFDECYPTYLYQKIDESKLKAYTRYQLRGYIEDSQDLEIYLIRYNAKHETVNVPGTGSLWPLSAQSPIGKCGEPNRCAPHLEWNPDLDCSCRDGEKCAHHSHHFSLDIDVGCTDLNEDLGVWVIFKIKTQDGHARLGNLEFLEEKPLVGEALARVKRAEKKWRDKREKLEWETNIVYKEAKESVDALFVNSQYDRLQADTNIAMIHAADKR.

Belongs to the delta endotoxin family.

Functionally, promotes colloidosmotic lysis by binding to the midgut epithelial cells of many lepidopteran larvae. This is Pesticidal crystal protein Cry1Aa (cry1Aa) from Bacillus thuringiensis subsp. sotto.